We begin with the raw amino-acid sequence, 676 residues long: MAPTSMSLAAKTPLPFSTLPSSGVAQRPVSVTASLEHKTNDARRKFLKLALGNLGVGLPTLLGAKRALAEEQGVSSSRMSYSRFLEYLDKDRVKKVDLFENGTIAIVEAISPELGNRVQRVRVQLPGLSQELLQKLREKNIDFAAHSNQEDSGSLLFNLIGNLAFPLILIGGLFLLSRRAQGGLGGPNGPGFPLGFGQSRAKFQMEPNTGVTFDDVAGVDEAKQDFMEVVEFLKKPERFTAVGARIPKGVLLVGPPGTGKTLLAKAIAGEAGVPFFSISGSEFVEMFVGVGASRVRDLFKKAKENAPCIVFVDEIDAVGRQRGTGIGGGNDEREQTLNQLLTEMDGFEGNTGIIVIAATNRADILDSALLRPGRFDRQVSVDVPDVRGRTEILKVHGSNKKFDTDVSLEVIAMRTPGFSGADLANLLNEAAILAGRRGRTAISSKEIDDSIDRIVAGMEGTVMTDGKSKSLVAYHEVGHAICGTLTPGHDPVQKVTLIPRGQARGLTWFIPMDDPTLISRQQLFARIVGGLGGRAAEEIIFGEPEVTTGAAGDLQQITGLAKQMVVTFGMSDIGPWSLMDSGAQSGDVIMRMMARNSMSEKLAEDIDTAVKRLSDEAYEIALSQIRSNREAMDKIVEVLLEKETLSGDEFRAILSEFTEIPVENRVPPATPAALPA.

A chloroplast-targeting transit peptide spans 1–32; it reads MAPTSMSLAAKTPLPFSTLPSSGVAQRPVSVT. A helical membrane pass occupies residues 155-175; it reads LLFNLIGNLAFPLILIGGLFL. 254–261 contributes to the ATP binding site; it reads GPPGTGKT. Zn(2+) is bound at residue His-475. The active site involves Glu-476. Zn(2+)-binding residues include His-479 and Asp-553.

This sequence in the N-terminal section; belongs to the AAA ATPase family. The protein in the C-terminal section; belongs to the peptidase M41 family. Requires Zn(2+) as cofactor.

It is found in the plastid. The protein localises to the chloroplast thylakoid membrane. Probable ATP-dependent zinc metallopeptidase. This chain is ATP-dependent zinc metalloprotease FTSH 2, chloroplastic (FTSH2), found in Oryza sativa subsp. japonica (Rice).